The following is a 347-amino-acid chain: D-alanine--D-alanine ligase (347 aa).

Residues 131-333 (KRVLESAGIA…YPELIERLVD (203 aa)) form the ATP-grasp domain. Residue 161 to 216 (EEKLAYPVFTKPSNMGSSVGISKSENQEELRQALKLAFRYDSRVLVEQGVNAREIE) coordinates ATP. 3 residues coordinate Mg(2+): Asp-287, Glu-300, and Asn-302.

Belongs to the D-alanine--D-alanine ligase family. Mg(2+) is required as a cofactor. It depends on Mn(2+) as a cofactor.

It localises to the cytoplasm. It catalyses the reaction 2 D-alanine + ATP = D-alanyl-D-alanine + ADP + phosphate + H(+). Its pathway is cell wall biogenesis; peptidoglycan biosynthesis. Cell wall formation. This Streptococcus pneumoniae serotype 19F (strain G54) protein is D-alanine--D-alanine ligase.